The chain runs to 449 residues: Anther-specific proline-rich protein APG (449 aa).

Residues 1 to 118 are compositionally biased toward pro residues; the sequence is PPKPQPKPPP…KPPAPSPPKP (118 aa). The interval 1-123 is disordered; it reads PPKPQPKPPP…SPPKPQNKTI (123 aa). Ser-132 serves as the catalytic Nucleophile. Active-site residues include Asp-425 and His-428.

Belongs to the 'GDSL' lipolytic enzyme family. Found in anther, only in male fertile plants.

The sequence is that of Anther-specific proline-rich protein APG (APG) from Brassica napus (Rape).